The chain runs to 1171 residues: Pesticidal crystal protein Cry1Ea (1171 aa).

The interval 1094–1124 (ESNSSVHASVYEEKSYTDRRRENPCESNRGY) is disordered. The span at 1103 to 1117 (VYEEKSYTDRRRENP) shows a compositional bias: basic and acidic residues.

It belongs to the delta endotoxin family.

Its function is as follows. Promotes colloidosmotic lysis by binding to the midgut epithelial cells of many lepidopteran larvae including Spodoptera species. This Bacillus thuringiensis subsp. kenyae protein is Pesticidal crystal protein Cry1Ea (cry1Ea).